Here is a 560-residue protein sequence, read N- to C-terminus: Probable methionine--tRNA ligase, cytoplasmic (560 aa).

Residues 16–26 (PYVNNQPHLGN) carry the 'HIGH' region motif. The 'KMSKS' region signature appears at 347–351 (KFSKS). ATP is bound at residue Lys350.

It belongs to the class-I aminoacyl-tRNA synthetase family.

The protein localises to the cytoplasm. It carries out the reaction tRNA(Met) + L-methionine + ATP = L-methionyl-tRNA(Met) + AMP + diphosphate. In Vairimorpha ceranae (strain BRL01) (Microsporidian parasite), this protein is Probable methionine--tRNA ligase, cytoplasmic.